The following is a 389-amino-acid chain: Sinapine esterase (389 aa).

A signal peptide spans methionine 1 to serine 25. Residue serine 41 is the Nucleophile of the active site. Asparagine 104, asparagine 137, and asparagine 320 each carry an N-linked (GlcNAc...) asparagine glycan. Catalysis depends on residues aspartate 345 and histidine 348. 2 N-linked (GlcNAc...) asparagine glycosylation sites follow: asparagine 372 and asparagine 383.

It belongs to the 'GDSL' lipolytic enzyme family. Expressed in most tissues or organs of the mature seedlings. Not expressed in roots of mature seedlings.

It localises to the secreted. It catalyses the reaction O-sinapoylcholine + H2O = (E)-sinapate + choline + H(+). With respect to regulation, inhibited by PMSF. Functionally, sinapine esterase that catalyzes that hydrolysis of sinapine, releasing choline and sinapate. Sinapine (O-sinapoylcholine) is the predominant phenolic compound in a complex group of sinapate esters in seeds of oilseed rape (B.napus). Sinapine has antinutritive activity and prevents the use of seed protein for food and feed. Shows broad substrate specificity towards various other choline esters, including phosphatidylcholine. The polypeptide is Sinapine esterase (Brassica napus (Rape)).